The chain runs to 227 residues: Cytochrome c oxidase subunit 2 (227 aa).

Residues 1-26 (MATWSNFNLQNSASPLMEQIIFFHDH) are Mitochondrial intermembrane-facing. The chain crosses the membrane as a helical span at residues 27-51 (TLVILIMITILVGYLMISLFFNSYI). Residues 52–62 (NRFLLEGQMIE) are Mitochondrial matrix-facing. Residues 63-81 (LIWTILPAITLIFIALPSL) traverse the membrane as a helical segment. Topologically, residues 82–227 (RLLYLLDELN…NFINWINNYS (146 aa)) are mitochondrial intermembrane. Cu cation-binding residues include His-161, Cys-196, Glu-198, Cys-200, His-204, and Met-207. Glu-198 serves as a coordination point for Mg(2+).

The protein belongs to the cytochrome c oxidase subunit 2 family. As to quaternary structure, component of the cytochrome c oxidase (complex IV, CIV), a multisubunit enzyme composed of a catalytic core of 3 subunits and several supernumerary subunits. The complex exists as a monomer or a dimer and forms supercomplexes (SCs) in the inner mitochondrial membrane with ubiquinol-cytochrome c oxidoreductase (cytochrome b-c1 complex, complex III, CIII). The cofactor is Cu cation.

The protein localises to the mitochondrion inner membrane. It carries out the reaction 4 Fe(II)-[cytochrome c] + O2 + 8 H(+)(in) = 4 Fe(III)-[cytochrome c] + 2 H2O + 4 H(+)(out). In terms of biological role, component of the cytochrome c oxidase, the last enzyme in the mitochondrial electron transport chain which drives oxidative phosphorylation. The respiratory chain contains 3 multisubunit complexes succinate dehydrogenase (complex II, CII), ubiquinol-cytochrome c oxidoreductase (cytochrome b-c1 complex, complex III, CIII) and cytochrome c oxidase (complex IV, CIV), that cooperate to transfer electrons derived from NADH and succinate to molecular oxygen, creating an electrochemical gradient over the inner membrane that drives transmembrane transport and the ATP synthase. Cytochrome c oxidase is the component of the respiratory chain that catalyzes the reduction of oxygen to water. Electrons originating from reduced cytochrome c in the intermembrane space (IMS) are transferred via the dinuclear copper A center (CU(A)) of subunit 2 and heme A of subunit 1 to the active site in subunit 1, a binuclear center (BNC) formed by heme A3 and copper B (CU(B)). The BNC reduces molecular oxygen to 2 water molecules using 4 electrons from cytochrome c in the IMS and 4 protons from the mitochondrial matrix. In Choristoneura rosaceana (Oblique banded leafroller), this protein is Cytochrome c oxidase subunit 2 (COII).